We begin with the raw amino-acid sequence, 282 residues long: Putative glycosyltransferase HI_0765 (282 aa).

It belongs to the glycosyltransferase 25 family.

The chain is Putative glycosyltransferase HI_0765 from Haemophilus influenzae (strain ATCC 51907 / DSM 11121 / KW20 / Rd).